The primary structure comprises 78 residues: Acyl carrier protein AcpP (78 aa).

The Carrier domain maps to 2-77; it reads SDTAERVKKI…DAVKYIDKAS (76 aa). At S37 the chain carries O-(pantetheine 4'-phosphoryl)serine.

The protein belongs to the acyl carrier protein (ACP) family. In terms of processing, 4'-phosphopantetheine is transferred from CoA to a specific serine of apo-ACP by AcpS. This modification is essential for activity because fatty acids are bound in thioester linkage to the sulfhydryl of the prosthetic group.

It localises to the cytoplasm. It functions in the pathway lipid metabolism; fatty acid biosynthesis. Carrier of the growing fatty acid chain in fatty acid biosynthesis. In Mesorhizobium japonicum (strain LMG 29417 / CECT 9101 / MAFF 303099) (Mesorhizobium loti (strain MAFF 303099)), this protein is Acyl carrier protein AcpP.